The sequence spans 100 residues: MVSESSQIVVEIIYAYPDQYFLKKISLDQPTTIQNVILQSGILAKYTEIDLRINKVGIFSRPAKLTDYVAHGDRIEIYRPLVADPKEIRRKRAAEQAQKA.

The protein belongs to the UPF0125 (RnfH) family.

This Haemophilus ducreyi (strain 35000HP / ATCC 700724) protein is UPF0125 protein HD_1828.